The sequence spans 262 residues: Carbonic anhydrase 13 (262 aa).

In terms of domain architecture, Alpha-carbonic anhydrase spans 4 to 261 (LSWGYGEHNG…LKGRRVRASF (258 aa)). His65 serves as the catalytic Proton donor/acceptor. The Zn(2+) site is built by His95, His97, and His120. Substrate is bound at residue 200–201 (TV).

The protein belongs to the alpha-carbonic anhydrase family. Requires Zn(2+) as cofactor. As to expression, expressed in spleen, lung, kidney, heart, brain, skeletal muscle and testis.

It carries out the reaction hydrogencarbonate + H(+) = CO2 + H2O. Its activity is regulated as follows. Inhibited by coumarins, sulfonamide derivatives such as acetazolamide (AZA) and Foscarnet (phosphonoformate trisodium salt). Functionally, reversible hydration of carbon dioxide. In Mus musculus (Mouse), this protein is Carbonic anhydrase 13 (Ca13).